We begin with the raw amino-acid sequence, 93 residues long: Putative regulatory protein Amet_2791 (93 aa).

The protein belongs to the RemA family.

This Alkaliphilus metalliredigens (strain QYMF) protein is Putative regulatory protein Amet_2791.